We begin with the raw amino-acid sequence, 478 residues long: Cysteine--tRNA ligase (478 aa).

Cys27 contacts Zn(2+). Positions Pro29–Asn39 match the 'HIGH' region motif. Positions 207, 232, and 236 each coordinate Zn(2+). Positions Lys264–Ser268 match the 'KMSKS' region motif. Position 267 (Lys267) interacts with ATP.

This sequence belongs to the class-I aminoacyl-tRNA synthetase family. As to quaternary structure, monomer. The cofactor is Zn(2+).

The protein localises to the cytoplasm. It catalyses the reaction tRNA(Cys) + L-cysteine + ATP = L-cysteinyl-tRNA(Cys) + AMP + diphosphate. The polypeptide is Cysteine--tRNA ligase (Desulforudis audaxviator (strain MP104C)).